A 350-amino-acid polypeptide reads, in one-letter code: Hydroxymethylglutaryl-CoA synthase (350 aa).

The active-site Proton donor/acceptor is E83. The active-site Acyl-thioester intermediate is C115. Positions 115 and 156 each coordinate (3S)-3-hydroxy-3-methylglutaryl-CoA. Position 204 (R204) interacts with CoA. T206 and H239 together coordinate (3S)-3-hydroxy-3-methylglutaryl-CoA. Catalysis depends on H239, which acts as the Proton donor/acceptor. K244 is a binding site for CoA. N271 and S301 together coordinate (3S)-3-hydroxy-3-methylglutaryl-CoA.

The protein belongs to the thiolase-like superfamily. Archaeal HMG-CoA synthase family. In terms of assembly, interacts with acetoacetyl-CoA thiolase that catalyzes the precedent step in the pathway and with a DUF35 protein. The acetoacetyl-CoA thiolase/HMG-CoA synthase complex channels the intermediate via a fused CoA-binding site, which allows for efficient coupling of the endergonic thiolase reaction with the exergonic HMGCS reaction.

It carries out the reaction acetoacetyl-CoA + acetyl-CoA + H2O = (3S)-3-hydroxy-3-methylglutaryl-CoA + CoA + H(+). Its pathway is metabolic intermediate biosynthesis; (R)-mevalonate biosynthesis; (R)-mevalonate from acetyl-CoA: step 2/3. Catalyzes the condensation of acetyl-CoA with acetoacetyl-CoA to form 3-hydroxy-3-methylglutaryl-CoA (HMG-CoA). Functions in the mevalonate (MVA) pathway leading to isopentenyl diphosphate (IPP), a key precursor for the biosynthesis of isoprenoid compounds that are building blocks of archaeal membrane lipids. The protein is Hydroxymethylglutaryl-CoA synthase of Thermococcus kodakarensis (strain ATCC BAA-918 / JCM 12380 / KOD1) (Pyrococcus kodakaraensis (strain KOD1)).